Consider the following 293-residue polypeptide: Elongation factor Ts (293 aa).

Residues 80–83 (TDFV) are involved in Mg(2+) ion dislocation from EF-Tu.

Belongs to the EF-Ts family.

Its subcellular location is the cytoplasm. Associates with the EF-Tu.GDP complex and induces the exchange of GDP to GTP. It remains bound to the aminoacyl-tRNA.EF-Tu.GTP complex up to the GTP hydrolysis stage on the ribosome. The sequence is that of Elongation factor Ts from Burkholderia cenocepacia (strain HI2424).